We begin with the raw amino-acid sequence, 721 residues long: Kinesin-like protein KIF2C (721 aa).

The interval 1–250 (MESLHARLFP…CSPLTVTDPI (250 aa)) is globular. Residues serine 3 and serine 19 each carry the phosphoserine modification. The residue at position 92 (serine 92) is a Phosphoserine; by AURKB. Positions 95 to 98 (SKIP) match the Microtubule tip localization signal motif. A phosphoserine mark is found at serine 106, serine 108, serine 112, serine 162, serine 171, serine 183, and serine 188. Positions 164 to 188 (EAEEQAHSTRSTSSANPGNSVRRKS) are disordered. Polar residues predominate over residues 171-182 (STRSTSSANPGN). Positions 203 to 234 (EKRAQNSELRIKRAQEYDSSFPNWEFARMIKE) are negative regulator of microtubule-binding. The region spanning 254-584 (RICVCVRKRP…LRYADRVKEL (331 aa)) is the Kinesin motor domain. Residues arginine 260 and 344-351 (GQTGSGKT) each bind ATP. Phosphoserine is present on residues serine 515 and serine 626. Residues 614–652 (GNEEEELSSQMSSFNEAMTQIRELEERALEELREIIQQG) adopt a coiled-coil conformation.

The protein belongs to the TRAFAC class myosin-kinesin ATPase superfamily. Kinesin family. MCAK/KIF2 subfamily. Interacts with CENPH. Interacts with MTUS2/TIP150; the interaction is direct. Interacts with MAPRE1; the interaction is direct, regulated by phosphorylation and is probably required for targeting to growing microtubule plus ends. Interacts with KIF18B at microtubule tips; this interaction increases the affinity of both partners for microtubule plus ends and is required for robust microtubule depolymerization. Phosphorylation by AURKA or AURKB strongly reduces KIF18B-binding. Post-translationally, phosphorylation by AURKB, regulates association with centromeres and kinetochores and the microtubule depolymerization activity. In terms of processing, ubiquitinated.

The protein localises to the cytoplasm. Its subcellular location is the cytoskeleton. It is found in the nucleus. It localises to the chromosome. The protein resides in the centromere. The protein localises to the kinetochore. Functionally, in complex with KIF18B, constitutes the major microtubule plus-end depolymerizing activity in mitotic cells. Regulates the turnover of microtubules at the kinetochore and functions in chromosome segregation during mitosis. Plays a role in chromosome congression and is required for the lateral to end-on conversion of the chromosome-microtubule attachment. This Mus musculus (Mouse) protein is Kinesin-like protein KIF2C (Kif2c).